A 555-amino-acid chain; its full sequence is MDSDEGYNYEFDEDEECSEEDSGAEEEEDDDEDEPDDDNLDLGEVELVEPGLGVGGERDGLLCGETGGGGGSALGPGGGGGGGGGGGGPGHEQEEDYRYEVLTAEQILQHMVECIREVNEVIQNPATITRILLSHFNWDKEKLMERYFDGNLEKLFAECHVINPSKKSRTRQMNTRSSAQDMPCQICYLNYPNSYFTGLECGHKFCMQCWSEYLTTKIMEEGMGQTISCPAHGCDILVDDNTVMRLITDSKVKLKYQHLITNSFVECNRLLKWCPAPDCHHVVKVQYPDAKPVRCKCGRQFCFNCGENWHDPVKCKWLKKWIKKCDDDSETSNWIAANTKECPKCHVTIEKDGGCNHMVCRNQNCKAEFCWVCLGPWEPHGSAWYNCNRYNEDDAKAARDAQERSRAALQRYLFYCNRYMNHMQSLRFEHKLYAQVKQKMEEMQQHNMSWIEVQFLKKAVDVLCQCRATLMYTYVFAFYLKKNNQSIIFENNQADLENATEVLSGYLERDISQDSLQDIKQKVQDKYRYCESRRRVLLQHVHEGYEKDLWEYIED.

Over residues 1 to 47 the composition is skewed to acidic residues; it reads MDSDEGYNYEFDEDEECSEEDSGAEEEEDDDEDEPDDDNLDLGEVEL. Residues 1 to 93 are disordered; it reads MDSDEGYNYE…GGGGGPGHEQ (93 aa). A compositionally biased stretch (gly residues) spans 65-90; it reads ETGGGGGSALGPGGGGGGGGGGGGPG. Positions 103 to 151 are UBA-like; that stretch reads TAEQILQHMVECIREVNEVIQNPATITRILLSHFNWDKEKLMERYFDGN. Residue Lys-140 is modified to N6-acetyllysine. The interval 180-391 is TRIAD supradomain; it reads QDMPCQICYL…SAWYNCNRYN (212 aa). 18 residues coordinate Zn(2+): Cys-184, Cys-187, Cys-201, His-203, Cys-206, Cys-209, Cys-229, Cys-234, Cys-274, Cys-279, Cys-295, Cys-297, Cys-302, Cys-305, His-310, Cys-315, Cys-342, and Cys-345. The segment at 184-234 adopts an RING-type 1 zinc-finger fold; that stretch reads CQICYLNYPNSYFTGLECGHKFCMQCWSEYLTTKIMEEGMGQTISCPAHGC. Residues 254–315 form an IBR-type zinc finger; it reads LKYQHLITNS…GENWHDPVKC (62 aa). Residues 342–373 form an RING-type 2; atypical zinc finger; the sequence is CPKCHVTIEKDGGCNHMVCRNQNCKAEFCWVC. Residue Cys-355 is part of the active site. Zn(2+)-binding residues include Cys-360, Cys-365, Cys-370, Cys-373, His-380, and Cys-387. The segment at 406 to 555 is ariadne domain; it reads RAALQRYLFY…EKDLWEYIED (150 aa).

It belongs to the RBR family. Ariadne subfamily. In terms of assembly, interacts (via the first RING-type zinc finger) with UBE2L3. Associates with cullin-RING ubiquitin ligase (CRL) complexes containing CUL1, CUL2 and CUL3. Interacts with neddylated CUL1. Interacts with neddylated CUL2. Interacts with neddylated CUL3. Interacts with neddylated CUL4A. Widely expressed.

Its subcellular location is the cytoplasm. It localises to the nucleus. The protein localises to the cajal body. The catalysed reaction is [E2 ubiquitin-conjugating enzyme]-S-ubiquitinyl-L-cysteine + [acceptor protein]-L-lysine = [E2 ubiquitin-conjugating enzyme]-L-cysteine + [acceptor protein]-N(6)-ubiquitinyl-L-lysine.. It functions in the pathway protein modification; protein ubiquitination. Its activity is regulated as follows. Autoinhibited by the ariadne domain, which masks the second RING-type zinc finger that contains the active site and inhibits the E3 activity. Inhibition is relieved upon binding to neddylated cullin-RING ubiquitin ligase complexes, which activate the E3 ligase activity of ARIH1. In terms of biological role, E3 ubiquitin-protein ligase, which catalyzes ubiquitination of target proteins together with ubiquitin-conjugating enzyme E2 UBE2L3. Acts as an atypical E3 ubiquitin-protein ligase by working together with cullin-RING ubiquitin ligase (CRL) complexes and initiating ubiquitination of CRL substrates: associates with CRL complexes and specifically mediates addition of the first ubiquitin on CRLs targets. The initial ubiquitin is then elongated by CDC34/UBE2R1 and UBE2R2. E3 ubiquitin-protein ligase activity is activated upon binding to neddylated cullin-RING ubiquitin ligase complexes. Plays a role in protein translation in response to DNA damage by mediating ubiquitination of EIF4E2, the consequences of EIF4E2 ubiquitination are however unclear. According to a report, EIF4E2 ubiquitination leads to promote EIF4E2 cap-binding and protein translation arrest. According to another report EIF4E2 ubiquitination leads to its subsequent degradation. Acts as the ligase involved in ISGylation of EIF4E2. In vitro, controls the degradation of the LINC (LInker of Nucleoskeleton and Cytoskeleton) complex member SUN2 and may therefore have a role in the formation and localization of the LINC complex, and as a consequence, may act in nuclear subcellular localization and nuclear morphology. The polypeptide is E3 ubiquitin-protein ligase ARIH1 (Arih1) (Mus musculus (Mouse)).